Here is a 106-residue protein sequence, read N- to C-terminus: Large ribosomal subunit protein uL23 (106 aa).

This sequence belongs to the universal ribosomal protein uL23 family. Part of the 50S ribosomal subunit. Contacts protein L29, and trigger factor when it is bound to the ribosome.

Functionally, one of the early assembly proteins it binds 23S rRNA. One of the proteins that surrounds the polypeptide exit tunnel on the outside of the ribosome. Forms the main docking site for trigger factor binding to the ribosome. The chain is Large ribosomal subunit protein uL23 from Acinetobacter baumannii (strain SDF).